Here is a 505-residue protein sequence, read N- to C-terminus: L-carnitine/gamma-butyrobetaine antiporter (505 aa).

Helical transmembrane passes span 10–30 (IEPKVFFPPLIIVGILCWLTV), 50–70 (IWGWAFEWYMVVMLFGWFWLV), 92–112 (IFMMFASCTSAAVLFWGSIEI), 143–163 (GPLPWATYSFLSVAFAYFFFV), 195–215 (FYLVALIFAMGTSLGLATPLV), 231–251 (LDAIIITCWIVLNAICVACGL), 263–283 (SYLSFLMLGWVFIVSGASFIM), 316–336 (WTVFYWAWWVIYAIQMSIFLA), 347–367 (LCFGMVLGLTASTWILWTVLG), 403–423 (FSTATMWGFFILCFIATVTLI), 446–466 (LLVRIGWSVLVGVIGIVLLAL), and 475–495 (AIIAGGCPLFFVNIMVTLSFI).

Belongs to the BCCT transporter (TC 2.A.15) family. CaiT subfamily. In terms of assembly, homotrimer.

The protein localises to the cell inner membrane. It carries out the reaction 4-(trimethylamino)butanoate(in) + (R)-carnitine(out) = 4-(trimethylamino)butanoate(out) + (R)-carnitine(in). Its pathway is amine and polyamine metabolism; carnitine metabolism. Functionally, catalyzes the exchange of L-carnitine for gamma-butyrobetaine. This chain is L-carnitine/gamma-butyrobetaine antiporter, found in Citrobacter koseri (strain ATCC BAA-895 / CDC 4225-83 / SGSC4696).